The chain runs to 232 residues: Megakaryocyte and platelet inhibitory receptor G6b (232 aa).

A signal peptide spans 1–17; the sequence is MALVLQLLPLLLSKVQG. Residues 18-140 are Extracellular-facing; that stretch reads NPEVSLEGNP…GSTHGSEYSK (123 aa). 2 N-linked (GlcNAc...) asparagine glycosylation sites follow: Asn-32 and Asn-112. The chain crosses the membrane as a helical span at residues 141–161; the sequence is VLIPLLGFGLVLGLGALGLVW. Residues 162-232 lie on the Cytoplasmic side of the membrane; that stretch reads WRRSCVPPSH…DASTVYAVVV (71 aa). 2 short sequence motifs (ITIM motif) span residues 200–205 and 226–231; these read LHYADL and TVYAVV. Position 202 is a phosphotyrosine (Tyr-202).

As to quaternary structure, interacts (via ITIM motif) with PTPN6 and PTPN11. Binds to heparin. N-glycosylated. In terms of processing, may be O-glycosylated. Post-translationally, phosphorylated.

The protein resides in the cell membrane. Functionally, inhibitory receptor that acts as a critical regulator of hematopoietic lineage differentiation, megakaryocyte function and platelet production. Inhibits platelet aggregation and activation by agonists such as ADP and collagen-related peptide. This regulation of megakaryocate function as well as platelet production ann activation is done through the inhibition (via the 2 ITIM motifs) of the receptors CLEC1B and GP6:FcRgamma signaling. Appears to operate in a calcium-independent manner. The protein is Megakaryocyte and platelet inhibitory receptor G6b of Rattus norvegicus (Rat).